Here is a 560-residue protein sequence, read N- to C-terminus: Serine palmitoyltransferase 2 (560 aa).

The helical transmembrane segment at 65–85 (PMLVAVLTYVGYGVLTLFGYL) threads the bilayer. N6-(pyridoxal phosphate)lysine is present on lysine 377.

It belongs to the class-II pyridoxal-phosphate-dependent aminotransferase family. Component of the serine palmitoyltransferase (SPT) complex, which is composed of SPTLC1, SPTLC2 or SPTLC3 and SPTSSA or SPTSSB. The heterodimer consisting of SPTLC1 and SPTLC2/SPTLC3 forms the catalytic core of the enzyme, while SPTSSA or SPTSSB subunits determine substrate specificity. SPT also interacts with ORMDL proteins, especially ORMDL3, which negatively regulate SPT activity in the presence of ceramides. Forms dimers of heterodimers with SPTLC1. Pyridoxal 5'-phosphate is required as a cofactor. In terms of tissue distribution, expressed in a variety of tissues. Expressed in brains cortices (at protein level). Expressed in brown and white adipose tissues. Expressed in liver.

Its subcellular location is the endoplasmic reticulum membrane. It carries out the reaction L-serine + hexadecanoyl-CoA + H(+) = 3-oxosphinganine + CO2 + CoA. It catalyses the reaction octadecanoyl-CoA + L-serine + H(+) = 3-oxoeicosasphinganine + CO2 + CoA. The protein operates within lipid metabolism; sphingolipid metabolism. SPT complex catalytic activity is negatively regulated by ORMDL proteins, including ORMDL3, in the presence of ceramides. This mechanism allows to maintain ceramide levels at sufficient concentrations for the production of complex sphingolipids, but which prevents the accumulation of ceramides to levels that trigger apoptosis. Its function is as follows. Component of the serine palmitoyltransferase multisubunit enzyme (SPT) that catalyzes the initial and rate-limiting step in sphingolipid biosynthesis by condensing L-serine and activated acyl-CoA (most commonly palmitoyl-CoA) to form long-chain bases. The SPT complex is composed of SPTLC1, SPTLC2 or SPTLC3 and SPTSSA or SPTSSB. Within this complex, the heterodimer consisting of SPTLC1 and SPTLC2/SPTLC3 forms the catalytic core. The composition of the serine palmitoyltransferase (SPT) complex determines the substrate preference. The SPTLC1-SPTLC2-SPTSSA complex shows a strong preference for C16-CoA substrate, while the SPTLC1-SPTLC3-SPTSSA isozyme uses both C14-CoA and C16-CoA as substrates, with a slight preference for C14-CoA. The SPTLC1-SPTLC2-SPTSSB complex shows a strong preference for C18-CoA substrate, while the SPTLC1-SPTLC3-SPTSSB isozyme displays an ability to use a broader range of acyl-CoAs, without apparent preference. Crucial for adipogenesis. In Mus musculus (Mouse), this protein is Serine palmitoyltransferase 2.